We begin with the raw amino-acid sequence, 207 residues long: Uracil phosphoribosyltransferase (207 aa).

Residues arginine 77, arginine 102, and 129–137 (DPMLATGGS) each bind 5-phospho-alpha-D-ribose 1-diphosphate. Uracil contacts are provided by residues isoleucine 192 and 197–199 (GDA). Aspartate 198 is a binding site for 5-phospho-alpha-D-ribose 1-diphosphate.

This sequence belongs to the UPRTase family. It depends on Mg(2+) as a cofactor.

It carries out the reaction UMP + diphosphate = 5-phospho-alpha-D-ribose 1-diphosphate + uracil. Its pathway is pyrimidine metabolism; UMP biosynthesis via salvage pathway; UMP from uracil: step 1/1. Its activity is regulated as follows. Allosterically activated by GTP. In terms of biological role, catalyzes the conversion of uracil and 5-phospho-alpha-D-ribose 1-diphosphate (PRPP) to UMP and diphosphate. This is Uracil phosphoribosyltransferase from Mesoplasma florum (strain ATCC 33453 / NBRC 100688 / NCTC 11704 / L1) (Acholeplasma florum).